The sequence spans 376 residues: DNA polymerase IV (376 aa).

The UmuC domain maps to 6-187; that stretch reads IIHIDMDAFF…LSIGKFYGVG (182 aa). Residues aspartate 10 and aspartate 105 each contribute to the Mg(2+) site. Glutamate 106 is a catalytic residue.

It belongs to the DNA polymerase type-Y family. Monomer. Requires Mg(2+) as cofactor.

The protein resides in the cytoplasm. The catalysed reaction is DNA(n) + a 2'-deoxyribonucleoside 5'-triphosphate = DNA(n+1) + diphosphate. Poorly processive, error-prone DNA polymerase involved in untargeted mutagenesis. Copies undamaged DNA at stalled replication forks, which arise in vivo from mismatched or misaligned primer ends. These misaligned primers can be extended by PolIV. Exhibits no 3'-5' exonuclease (proofreading) activity. May be involved in translesional synthesis, in conjunction with the beta clamp from PolIII. This is DNA polymerase IV from Desulfotalea psychrophila (strain LSv54 / DSM 12343).